A 286-amino-acid polypeptide reads, in one-letter code: MIAKIIDGKYVSEKIKQEIAKQVRKNMNSGKRAPGLAMILVGHNPISQIYVTNKKKACEQVGLISFLYTLPITATENEIFQLIETLNNDNRIDGILIQLPLPNKLNKINVLEHIAPDKDVDGFHPYNVGRLCQRSPTLRPCTSRGIITLLEWYNIDMFVLHAVVVGASNIVGRPMTMELLLAGCTVSVTHRFTQNLKIYIENADLLIVAVGQANFIPGSWIKQGAIVIDVGINRLNNGNIVGDVHFSSAYERAAYITPVPGGVGPMTVVTLIQNTLQAYDDHHLVR.

Residues 166–168 (GAS) and I232 contribute to the NADP(+) site.

The protein belongs to the tetrahydrofolate dehydrogenase/cyclohydrolase family. In terms of assembly, homodimer.

The catalysed reaction is (6R)-5,10-methylene-5,6,7,8-tetrahydrofolate + NADP(+) = (6R)-5,10-methenyltetrahydrofolate + NADPH. The enzyme catalyses (6R)-5,10-methenyltetrahydrofolate + H2O = (6R)-10-formyltetrahydrofolate + H(+). It participates in one-carbon metabolism; tetrahydrofolate interconversion. Functionally, catalyzes the oxidation of 5,10-methylenetetrahydrofolate to 5,10-methenyltetrahydrofolate and then the hydrolysis of 5,10-methenyltetrahydrofolate to 10-formyltetrahydrofolate. This Blochmanniella pennsylvanica (strain BPEN) protein is Bifunctional protein FolD.